A 386-amino-acid polypeptide reads, in one-letter code: Lipoyl synthase, mitochondrial (386 aa).

The transit peptide at 1–21 directs the protein to the mitochondrion; that stretch reads MISRNSILLRRLYPTTIIRTL. Positions 107, 112, 118, 137, 141, 144, and 352 each coordinate [4Fe-4S] cluster. Residues 122-341 form the Radical SAM core domain; the sequence is KKSEATATIM…RDTALDMGFL (220 aa).

It belongs to the radical SAM superfamily. Lipoyl synthase family. [4Fe-4S] cluster serves as cofactor.

It is found in the mitochondrion. The catalysed reaction is [[Fe-S] cluster scaffold protein carrying a second [4Fe-4S](2+) cluster] + N(6)-octanoyl-L-lysyl-[protein] + 2 oxidized [2Fe-2S]-[ferredoxin] + 2 S-adenosyl-L-methionine + 4 H(+) = [[Fe-S] cluster scaffold protein] + N(6)-[(R)-dihydrolipoyl]-L-lysyl-[protein] + 4 Fe(3+) + 2 hydrogen sulfide + 2 5'-deoxyadenosine + 2 L-methionine + 2 reduced [2Fe-2S]-[ferredoxin]. It functions in the pathway protein modification; protein lipoylation via endogenous pathway; protein N(6)-(lipoyl)lysine from octanoyl-[acyl-carrier-protein]: step 2/2. Its function is as follows. Catalyzes the radical-mediated insertion of two sulfur atoms into the C-6 and C-8 positions of the octanoyl moiety bound to the lipoyl domains of lipoate-dependent enzymes, thereby converting the octanoylated domains into lipoylated derivatives. This is Lipoyl synthase, mitochondrial (LAB5) from Candida albicans (strain SC5314 / ATCC MYA-2876) (Yeast).